Consider the following 264-residue polypeptide: MESWLLRRGARVRCLHPPSWLPAWCFLCLLPVPQTLQLTGLVSLTHTSLPIMVSLANTDVFFSCRIEDFTRLQRDLPVKLFHTDIHGRRRWEKQINCQHRPGMENHTRDCMVKLSQANTSATGIYYFIVEGEETYQSDGVVILVRDTVYQPPAFKVQEALMLGFTSLMSVLGVLGTALLLWKKKQISVLGKHTAKTCSGLKSTVGTTKPPAESVYTSLQRRETEVYACMKEETGSPVFSQSPATKEKLNRFEDDNEFNLVYENL.

Positions 1–37 (MESWLLRRGARVRCLHPPSWLPAWCFLCLLPVPQTLQ) are cleaved as a signal peptide. Over 38-159 (LTGLVSLTHT…QPPAFKVQEA (122 aa)) the chain is Extracellular. Positions 49–145 (LPIMVSLANT…QSDGVVILVR (97 aa)) constitute an Ig-like V-type domain. Cys64 and Cys110 are oxidised to a cystine. N-linked (GlcNAc...) asparagine glycosylation is found at Asn105 and Asn118. Residues 160-180 (LMLGFTSLMSVLGVLGTALLL) traverse the membrane as a helical segment. Residues 181 to 264 (WKKKQISVLG…NEFNLVYENL (84 aa)) lie on the Cytoplasmic side of the membrane. The ITAM domain maps to 212–232 (ESVYTSLQRRETEVYACMKEE). Residues Tyr215 and Tyr226 each carry the phosphotyrosine modification.

In terms of assembly, no direct interaction with the B-cell antigen receptor (BCR). Interacts with SYK; probably involved in BCR signaling. Interacts with ZAP70. N-glycosylated. In terms of tissue distribution, highly expressed in the spleen, expressed by both B- and CD4+ and CD8+ T-cells, as well as non-T- and non-B-cells, including macrophages and neutrophils. Expressed at low levels, if any, in non-immune tissue.

The protein localises to the cell membrane. Its function is as follows. May function in immune system as a receptor which activates via the calcineurin/NFAT-signaling pathway the downstream cytokine gene promoters. Activates the transcription of IL-13 and TNF-alpha promoters. May be involved in the regulation of B-cell, but not T-cell, development. The chain is NFAT activation molecule 1 (Nfam1) from Mus musculus (Mouse).